The primary structure comprises 63 residues: Large ribosomal subunit protein bL32 (63 aa).

Residues 1–20 (MANPKAKMSKSRRDKRRAQF) are disordered. Basic residues predominate over residues 7–18 (KMSKSRRDKRRA).

This sequence belongs to the bacterial ribosomal protein bL32 family.

This chain is Large ribosomal subunit protein bL32, found in Chlorobaculum parvum (strain DSM 263 / NCIMB 8327) (Chlorobium vibrioforme subsp. thiosulfatophilum).